The chain runs to 346 residues: S-adenosylmethionine:tRNA ribosyltransferase-isomerase (346 aa).

The protein belongs to the QueA family. As to quaternary structure, monomer.

It is found in the cytoplasm. The enzyme catalyses 7-aminomethyl-7-carbaguanosine(34) in tRNA + S-adenosyl-L-methionine = epoxyqueuosine(34) in tRNA + adenine + L-methionine + 2 H(+). The protein operates within tRNA modification; tRNA-queuosine biosynthesis. In terms of biological role, transfers and isomerizes the ribose moiety from AdoMet to the 7-aminomethyl group of 7-deazaguanine (preQ1-tRNA) to give epoxyqueuosine (oQ-tRNA). The protein is S-adenosylmethionine:tRNA ribosyltransferase-isomerase of Neisseria gonorrhoeae (strain ATCC 700825 / FA 1090).